The primary structure comprises 360 residues: Chorismate synthase (360 aa).

Residue arginine 46 coordinates NADP(+). Residues 123 to 125 (RSS), 235 to 236 (NA), glycine 275, 290 to 294 (KPTPS), and arginine 316 each bind FMN.

This sequence belongs to the chorismate synthase family. As to quaternary structure, homotetramer. It depends on FMNH2 as a cofactor.

It carries out the reaction 5-O-(1-carboxyvinyl)-3-phosphoshikimate = chorismate + phosphate. Its pathway is metabolic intermediate biosynthesis; chorismate biosynthesis; chorismate from D-erythrose 4-phosphate and phosphoenolpyruvate: step 7/7. Its function is as follows. Catalyzes the anti-1,4-elimination of the C-3 phosphate and the C-6 proR hydrogen from 5-enolpyruvylshikimate-3-phosphate (EPSP) to yield chorismate, which is the branch point compound that serves as the starting substrate for the three terminal pathways of aromatic amino acid biosynthesis. This reaction introduces a second double bond into the aromatic ring system. This chain is Chorismate synthase, found in Wolinella succinogenes (strain ATCC 29543 / DSM 1740 / CCUG 13145 / JCM 31913 / LMG 7466 / NCTC 11488 / FDC 602W) (Vibrio succinogenes).